We begin with the raw amino-acid sequence, 302 residues long: Methylsterol monooxygenase erg25A (302 aa).

N-linked (GlcNAc...) asparagine glycosylation is present at Asn-5. 3 helical membrane-spanning segments follow: residues 47–67 (NIVATATGIITFLAHEIIYFS), 105–125 (YILLIHFVVELPLIVLFHPMM), and 132–152 (FTIPFPDLRTLTAQIIIFFLL). Residues 147-283 (IIFFLLEDTY…FRHWDVLMGT (137 aa)) form the Fatty acid hydroxylase domain. The Histidine box-1 motif lies at 161 to 165 (HRAMH). Residues 174 to 178 (HRIHH) carry the Histidine box-2 motif. A helical membrane pass occupies residues 193-213 (PWETLLLGLGTIGPPLLLALM). The short motif at 258-264 (WHDDHHR) is the Histidine box-3 element. The N-linked (GlcNAc...) asparagine glycan is linked to Asn-269.

The protein belongs to the sterol desaturase family. Fe cation serves as cofactor.

The protein localises to the endoplasmic reticulum membrane. It participates in steroid metabolism; ergosterol biosynthesis. Functionally, sterol-C4-methyl oxidase; part of the third module of ergosterol biosynthesis pathway that includes the late steps of the pathway. Erg25A is a catalytic component of the C-4 demethylation complex that catalyzes the conversion of 4,4-dimethylfecosterol into fecosterol via 4-methylfecosterol. The third module or late pathway involves the ergosterol synthesis itself through consecutive reactions that mainly occur in the endoplasmic reticulum (ER) membrane. Firstly, the squalene synthase erg9 catalyzes the condensation of 2 farnesyl pyrophosphate moieties to form squalene, which is the precursor of all steroids. Squalene synthase is crucial for balancing the incorporation of farnesyl diphosphate (FPP) into sterol and nonsterol isoprene synthesis. Secondly, squalene is converted into lanosterol by the consecutive action of the squalene epoxidase erg1 and the lanosterol synthase erg7. Then, the delta(24)-sterol C-methyltransferase erg6 methylates lanosterol at C-24 to produce eburicol. Eburicol is the substrate of the sterol 14-alpha demethylase encoded by cyp51A and cyp51B, to yield 4,4,24-trimethyl ergosta-8,14,24(28)-trienol. The C-14 reductase erg24 then reduces the C14=C15 double bond which leads to 4,4-dimethylfecosterol. A sequence of further demethylations at C-4, involving the C-4 demethylation complex containing the C-4 methylsterol oxidases erg25A or erg25B, the sterol-4-alpha-carboxylate 3-dehydrogenase erg26 and the 3-keto-steroid reductase erg27, leads to the production of fecosterol via 4-methylfecosterol. The C-8 sterol isomerase erg2 then catalyzes the reaction which results in unsaturation at C-7 in the B ring of sterols and thus converts fecosterol to episterol. The sterol-C5-desaturase erg3B then catalyzes the introduction of a C-5 double bond in the B ring to produce 5-dehydroepisterol. The 2 other sterol-C5-desaturases, erg3A and erg3C, seem to be less important in ergosterol biosynthesis. The C-22 sterol desaturase erg5 further converts 5-dehydroepisterol into ergosta-5,7,22,24(28)-tetraen-3beta-ol by forming the C-22(23) double bond in the sterol side chain. Finally, ergosta-5,7,22,24(28)-tetraen-3beta-ol is substrate of the C-24(28) sterol reductases erg4A and erg4B to produce ergosterol. Possible alternative sterol biosynthetic pathways might exist from fecosterol to ergosterol, depending on the activities of the erg3 isoforms. This is Methylsterol monooxygenase erg25A from Aspergillus fumigatus (strain ATCC MYA-4609 / CBS 101355 / FGSC A1100 / Af293) (Neosartorya fumigata).